A 178-amino-acid polypeptide reads, in one-letter code: Large ribosomal subunit protein uL10 (178 aa).

This sequence belongs to the universal ribosomal protein uL10 family. As to quaternary structure, part of the ribosomal stalk of the 50S ribosomal subunit. The N-terminus interacts with L11 and the large rRNA to form the base of the stalk. The C-terminus forms an elongated spine to which L12 dimers bind in a sequential fashion forming a multimeric L10(L12)X complex.

Its function is as follows. Forms part of the ribosomal stalk, playing a central role in the interaction of the ribosome with GTP-bound translation factors. In Mycobacterium tuberculosis (strain ATCC 25177 / H37Ra), this protein is Large ribosomal subunit protein uL10.